Reading from the N-terminus, the 1578-residue chain is FERM and PDZ domain-containing protein 1 (1578 aa).

Residues 57–135 (TVKIDKDTLL…SLSITVVRCT (79 aa)) form the PDZ domain. An FERM domain is found at 181–496 (NVLKLYLENG…GYYRLLVDPV (316 aa)). Disordered regions lie at residues 555–616 (KEEQ…EEDD), 720–743 (SDSS…QGWT), and 759–831 (PLAF…VKKY). A compositionally biased stretch (polar residues) spans 720-729 (SDSSESTASR). Over residues 730-742 (QGGAPPAWGQQGW) the composition is skewed to low complexity. The span at 793 to 811 (AEPSATSLQNKASTSSPEN) shows a compositional bias: polar residues. Positions 822–831 (PSRRGGVKKY) are enriched in basic residues. The important for interaction with GPSM2 stretch occupies residues 924 to 931 (EPETMETK). Disordered stretches follow at residues 950–1030 (PNNK…LASN), 1070–1194 (KYTE…QGCQ), and 1347–1374 (PQPE…SAGS). Polar residues predominate over residues 968-986 (TPHCSNPGSSGPDTAQARP). Positions 1100 to 1117 (TKEEPQGQLSLERDREVT) are enriched in basic and acidic residues. Polar residues predominate over residues 1139–1150 (DVSNNVSQTLDI).

Interacts with GPSM1. Interacts with GPSM2 (via TPR repeat region).

The protein localises to the cytoplasm. The protein resides in the cytosol. It is found in the cell membrane. Stabilizes membrane-bound GPSM1, and thereby promotes its interaction with GNAI1. This is FERM and PDZ domain-containing protein 1 (FRMPD1) from Homo sapiens (Human).